The primary structure comprises 225 residues: F-box protein SKIP27 (225 aa).

In terms of domain architecture, F-box spans 121-169; sequence KSRLECLPQDLLIRVICGVDHEDLKSLKLVSKSIREASLVAKTLHFAYT.

Part of a SCF (ASK-cullin-F-box) protein ligase complex. Interacts with SKP1A/ASK1 and SPK1B/ASK2.

It localises to the nucleus. Its pathway is protein modification; protein ubiquitination. Component of SCF(ASK-cullin-F-box) E3 ubiquitin ligase complexes, which may mediate the ubiquitination and subsequent proteasomal degradation of target proteins. This is F-box protein SKIP27 (SKIP27) from Arabidopsis thaliana (Mouse-ear cress).